Here is a 485-residue protein sequence, read N- to C-terminus: Arginine/agmatine antiporter (485 aa).

The next 12 helical transmembrane spans lie at G12–Q34, A38–A60, I89–I111, G126–L148, S155–A177, T211–G230, V243–F265, V291–A313, W363–L385, I400–A422, Y427–G446, and I461–I483.

Belongs to the amino acid-polyamine-organocation (APC) superfamily. Basic amino acid/polyamine antiporter (APA) (TC 2.A.3.2) family.

It is found in the cell inner membrane. Functionally, catalyzes the exchange of L-arginine for agmatine. The arginine uptake by the bacterium in the macrophage may be a virulence factor against the host innate immune response. In Chlamydia pneumoniae (Chlamydophila pneumoniae), this protein is Arginine/agmatine antiporter (aaxC).